The sequence spans 221 residues: Glutathione S-transferase alpha-3 (221 aa).

Residues 3 to 83 (GKPVLHYFDG…YIATKYNLYG (81 aa)) enclose the GST N-terminal domain. N6-succinyllysine is present on K4. Residues Y9, R45, 54–55 (QV), and 67–68 (QT) each bind glutathione. Residues 85–207 (DMKERALIDM…LQPGSQRKPL (123 aa)) enclose the GST C-terminal domain.

This sequence belongs to the GST superfamily. Alpha family. Heterodimer of YC1 and YC2.

It localises to the cytoplasm. The enzyme catalyses RX + glutathione = an S-substituted glutathione + a halide anion + H(+). It carries out the reaction androst-5-ene-3,17-dione = androst-4-ene-3,17-dione. The catalysed reaction is pregn-5-ene-3,20-dione = progesterone. Functionally, conjugation of reduced glutathione to a wide number of exogenous and endogenous hydrophobic electrophiles. Catalyzes isomerization reactions that contribute to the biosynthesis of steroid hormones. Efficiently catalyze obligatory double-bond isomerizations of delta(5)-androstene-3,17-dione and delta(5)-pregnene-3,20-dione, precursors to testosterone and progesterone, respectively. Has substantial activity toward aflatoxin B1-8,9-epoxide. The polypeptide is Glutathione S-transferase alpha-3 (Rattus norvegicus (Rat)).